The sequence spans 834 residues: Periplasmic nitrate reductase (834 aa).

A signal peptide (tat-type signal) is located at residues 1–29 (MNLTRREFAKANAAAIAAAAAGLPILVRA). Positions 41–97 (LDWNKAPCRFCGTGCSVMVATRDGQVVATHGDIKAEVNRGINCVKGYFLSKIMYGSD) constitute a 4Fe-4S Mo/W bis-MGD-type domain. Residues Cys-48, Cys-51, Cys-55, and Cys-83 each coordinate [4Fe-4S] cluster. Mo-bis(molybdopterin guanine dinucleotide) contacts are provided by residues Lys-85, Gln-152, Asn-177, Cys-181, 214 to 221 (WGSNMAEM), 245 to 249 (STFEH), 264 to 266 (QTD), Met-375, Gln-379, Asn-485, 511 to 512 (SD), Lys-534, Asp-561, and 721 to 730 (TGRVLEHWHT). Phe-797 is a binding site for substrate. Mo-bis(molybdopterin guanine dinucleotide) contacts are provided by Asn-805 and Lys-822.

This sequence belongs to the prokaryotic molybdopterin-containing oxidoreductase family. NasA/NapA/NarB subfamily. Component of the periplasmic nitrate reductase NapAB complex composed of NapA and NapB. It depends on [4Fe-4S] cluster as a cofactor. Mo-bis(molybdopterin guanine dinucleotide) serves as cofactor. Predicted to be exported by the Tat system. The position of the signal peptide cleavage has not been experimentally proven.

Its subcellular location is the periplasm. It carries out the reaction 2 Fe(II)-[cytochrome] + nitrate + 2 H(+) = 2 Fe(III)-[cytochrome] + nitrite + H2O. In terms of biological role, catalytic subunit of the periplasmic nitrate reductase complex NapAB. Receives electrons from NapB and catalyzes the reduction of nitrate to nitrite. This chain is Periplasmic nitrate reductase, found in Pseudomonas paraeruginosa (strain DSM 24068 / PA7) (Pseudomonas aeruginosa (strain PA7)).